Here is a 291-residue protein sequence, read N- to C-terminus: Alpha-soluble NSF attachment protein (291 aa).

4 TPR repeats span residues 14-51 (ADKRLRGGNFFKMFGGGSSRYDDAASDYTKAANLFKMS), 77-110 (AASSYVLAAGCYKKGNVIDAITCLKAAIEYYTDE), 117-150 (AKHQKEIAELYEAEGDFDQAIASYQIASDYFDGE), and 157-190 (HQCLLKIALFSAQLERYEKSIEIYEQVAAASLDN).

This sequence belongs to the SNAP family. Interacts with nsfA and probably SNARE proteins.

It is found in the cytoplasmic vesicle membrane. In terms of biological role, may be required for vesicular transport between the endoplasmic reticulum and the Golgi apparatus. Involved in vesicle fusion with nsfA and probably SNARE proteins. The protein is Alpha-soluble NSF attachment protein (snpA) of Dictyostelium discoideum (Social amoeba).